A 201-amino-acid polypeptide reads, in one-letter code: 3-isopropylmalate dehydratase small subunit (201 aa).

This sequence belongs to the LeuD family. LeuD type 1 subfamily. Heterodimer of LeuC and LeuD.

It catalyses the reaction (2R,3S)-3-isopropylmalate = (2S)-2-isopropylmalate. It functions in the pathway amino-acid biosynthesis; L-leucine biosynthesis; L-leucine from 3-methyl-2-oxobutanoate: step 2/4. Its function is as follows. Catalyzes the isomerization between 2-isopropylmalate and 3-isopropylmalate, via the formation of 2-isopropylmaleate. In Dinoroseobacter shibae (strain DSM 16493 / NCIMB 14021 / DFL 12), this protein is 3-isopropylmalate dehydratase small subunit.